The primary structure comprises 331 residues: MARMYYDADAQLELLKDKTIAIIGYGSQGHAHALNLRDSGLNVVVGLYAGSRSAERARAEGLAVHPVAEAAKMADWIMILLPDEVQRVVYEQEIAPHLQPGNVLSFAHGFNIHFGQIVPPAHVDVVMVAPKGPGHLVRRTYAQGEGVPCLFAVYQDASGQARDLAMAYAKGIGGTRAGILETTFREETETDLFGEQVVLCGGLSALIKAGFETLVQAGYQPELAYFECLHEVKLIVDLIVEGGLAKMRDSISNTAEYGDLTRGPRIITEETRAEMRKILHEIQTGQFAREFVLENMAGKPGFTAMRRREAEHPIEQVGQELRSMFSWLKRA.

Residues 2-182 (ARMYYDADAQ…GGTRAGILET (181 aa)) enclose the KARI N-terminal Rossmann domain. Residues 25–28 (YGSQ), Ser51, Ser53, and 83–86 (DEVQ) contribute to the NADP(+) site. The active site involves His108. Position 134 (Gly134) interacts with NADP(+). One can recognise a KARI C-terminal knotted domain in the interval 183-328 (TFREETETDL…QELRSMFSWL (146 aa)). Asp191, Glu195, Glu227, and Glu231 together coordinate Mg(2+). A substrate-binding site is contributed by Ser252.

It belongs to the ketol-acid reductoisomerase family. It depends on Mg(2+) as a cofactor.

It catalyses the reaction (2R)-2,3-dihydroxy-3-methylbutanoate + NADP(+) = (2S)-2-acetolactate + NADPH + H(+). It carries out the reaction (2R,3R)-2,3-dihydroxy-3-methylpentanoate + NADP(+) = (S)-2-ethyl-2-hydroxy-3-oxobutanoate + NADPH + H(+). Its pathway is amino-acid biosynthesis; L-isoleucine biosynthesis; L-isoleucine from 2-oxobutanoate: step 2/4. The protein operates within amino-acid biosynthesis; L-valine biosynthesis; L-valine from pyruvate: step 2/4. Involved in the biosynthesis of branched-chain amino acids (BCAA). Catalyzes an alkyl-migration followed by a ketol-acid reduction of (S)-2-acetolactate (S2AL) to yield (R)-2,3-dihydroxy-isovalerate. In the isomerase reaction, S2AL is rearranged via a Mg-dependent methyl migration to produce 3-hydroxy-3-methyl-2-ketobutyrate (HMKB). In the reductase reaction, this 2-ketoacid undergoes a metal-dependent reduction by NADPH to yield (R)-2,3-dihydroxy-isovalerate. The chain is Ketol-acid reductoisomerase (NADP(+)) from Thermosynechococcus vestitus (strain NIES-2133 / IAM M-273 / BP-1).